The following is a 95-amino-acid chain: Aspartyl/glutamyl-tRNA(Asn/Gln) amidotransferase subunit C (95 aa).

Belongs to the GatC family. As to quaternary structure, heterotrimer of A, B and C subunits.

The catalysed reaction is L-glutamyl-tRNA(Gln) + L-glutamine + ATP + H2O = L-glutaminyl-tRNA(Gln) + L-glutamate + ADP + phosphate + H(+). The enzyme catalyses L-aspartyl-tRNA(Asn) + L-glutamine + ATP + H2O = L-asparaginyl-tRNA(Asn) + L-glutamate + ADP + phosphate + 2 H(+). Functionally, allows the formation of correctly charged Asn-tRNA(Asn) or Gln-tRNA(Gln) through the transamidation of misacylated Asp-tRNA(Asn) or Glu-tRNA(Gln) in organisms which lack either or both of asparaginyl-tRNA or glutaminyl-tRNA synthetases. The reaction takes place in the presence of glutamine and ATP through an activated phospho-Asp-tRNA(Asn) or phospho-Glu-tRNA(Gln). The polypeptide is Aspartyl/glutamyl-tRNA(Asn/Gln) amidotransferase subunit C (Bartonella henselae (strain ATCC 49882 / DSM 28221 / CCUG 30454 / Houston 1) (Rochalimaea henselae)).